The following is a 1035-amino-acid chain: Protein SEY1 homolog (1035 aa).

The GB1/RHD3-type G domain occupies 32-267; sequence DGTFICVSVF…TTLIPLTDSS (236 aa). GTP is bound at residue 42-49; the sequence is GPQSSGKS.

Belongs to the TRAFAC class dynamin-like GTPase superfamily. GB1/RHD3 GTPase family. RHD3 subfamily.

It is found in the endoplasmic reticulum membrane. Probable GTP-binding protein that may be involved in cell development. This Giardia intestinalis (strain ATCC 50803 / WB clone C6) (Giardia lamblia) protein is Protein SEY1 homolog.